The chain runs to 211 residues: Shikimate kinase (211 aa).

Positions methionine 1 to alanine 23 are disordered. An ATP-binding site is contributed by glycine 50 to threonine 55. A Mg(2+)-binding site is contributed by threonine 54. Residues aspartate 72, arginine 96, and glycine 118 each coordinate substrate. Arginine 156 contributes to the ATP binding site. Arginine 175 contacts substrate.

It belongs to the shikimate kinase family. As to quaternary structure, monomer. Mg(2+) serves as cofactor.

The protein resides in the cytoplasm. It catalyses the reaction shikimate + ATP = 3-phosphoshikimate + ADP + H(+). It functions in the pathway metabolic intermediate biosynthesis; chorismate biosynthesis; chorismate from D-erythrose 4-phosphate and phosphoenolpyruvate: step 5/7. In terms of biological role, catalyzes the specific phosphorylation of the 3-hydroxyl group of shikimic acid using ATP as a cosubstrate. The protein is Shikimate kinase of Bordetella bronchiseptica (strain ATCC BAA-588 / NCTC 13252 / RB50) (Alcaligenes bronchisepticus).